A 78-amino-acid chain; its full sequence is Acyl carrier protein (78 aa).

Positions 2-77 (STIEERVKKI…AAIDYILSHQ (76 aa)) constitute a Carrier domain. An O-(pantetheine 4'-phosphoryl)serine modification is found at S37.

This sequence belongs to the acyl carrier protein (ACP) family. 4'-phosphopantetheine is transferred from CoA to a specific serine of apo-ACP by AcpS. This modification is essential for activity because fatty acids are bound in thioester linkage to the sulfhydryl of the prosthetic group.

The protein resides in the cytoplasm. The protein operates within lipid metabolism; fatty acid biosynthesis. Its function is as follows. Carrier of the growing fatty acid chain in fatty acid biosynthesis. This Tolumonas auensis (strain DSM 9187 / NBRC 110442 / TA 4) protein is Acyl carrier protein.